Here is a 371-residue protein sequence, read N- to C-terminus: S-adenosylmethionine:tRNA ribosyltransferase-isomerase (371 aa).

This sequence belongs to the QueA family. In terms of assembly, monomer.

It localises to the cytoplasm. The enzyme catalyses 7-aminomethyl-7-carbaguanosine(34) in tRNA + S-adenosyl-L-methionine = epoxyqueuosine(34) in tRNA + adenine + L-methionine + 2 H(+). It participates in tRNA modification; tRNA-queuosine biosynthesis. Transfers and isomerizes the ribose moiety from AdoMet to the 7-aminomethyl group of 7-deazaguanine (preQ1-tRNA) to give epoxyqueuosine (oQ-tRNA). The sequence is that of S-adenosylmethionine:tRNA ribosyltransferase-isomerase from Nitratidesulfovibrio vulgaris (strain ATCC 29579 / DSM 644 / CCUG 34227 / NCIMB 8303 / VKM B-1760 / Hildenborough) (Desulfovibrio vulgaris).